We begin with the raw amino-acid sequence, 462 residues long: Threonine--tRNA ligase, mitochondrial (462 aa).

Residues 1-45 constitute a mitochondrion transit peptide; sequence MKIQLVRWHCSRNALWNRAFYSTRKATKNASSATPATMTSMVSQR.

Belongs to the class-II aminoacyl-tRNA synthetase family.

Its subcellular location is the mitochondrion matrix. The catalysed reaction is tRNA(Thr) + L-threonine + ATP = L-threonyl-tRNA(Thr) + AMP + diphosphate + H(+). In Saccharomyces cerevisiae (strain ATCC 204508 / S288c) (Baker's yeast), this protein is Threonine--tRNA ligase, mitochondrial (MST1).